A 369-amino-acid chain; its full sequence is MISPQEKQDKVIRATDLDALSCRYSANNKSYFSKPDPFIDSLISSYKMHLPLCTGYTNMSANRTLRSVFNEQKLPLINRGTYLRTESIDVITQEFIKEFKKCQVISLGGGSDTRCFRILEEHGEDVRYCEIDFHESVKIKKLAIINDKKLADIVKYDEESQSITSKEEFARLESNIHTENYHLIGYDLRELTGALDSGAILEYVDTSLPTLILSECVLCYLNPKENERIIEFWKNAFASKALLALLIYEPMSLNDAFGTTMTHNLSNRGINLLTFNEYPNLEARYKFLSEKCQSSNVKLTDMSNVGGYDSDNTTKAWINSKDLARINRLELVDEIEEIRLLLKHYCLCYCEFSHSPSLKTINKWKWILE.

S-adenosyl-L-methionine contacts are provided by residues R84, G108, D132, 187 to 188 (DL), and E215.

The protein belongs to the methyltransferase superfamily. LCMT family.

The enzyme catalyses [phosphatase 2A protein]-C-terminal L-leucine + S-adenosyl-L-methionine = [phosphatase 2A protein]-C-terminal L-leucine methyl ester + S-adenosyl-L-homocysteine. Methylates the carboxyl group of the C-terminal leucine residue of protein phosphatase 2A catalytic subunits to form alpha-leucine ester residues. This Debaryomyces hansenii (strain ATCC 36239 / CBS 767 / BCRC 21394 / JCM 1990 / NBRC 0083 / IGC 2968) (Yeast) protein is Leucine carboxyl methyltransferase 1 (PPM1).